The primary structure comprises 310 residues: Thioredoxin reductase (310 aa).

34–41 (NGMQPGGQ) serves as a coordination point for FAD. Residues Cys135 and Cys138 are joined by a disulfide bond. 281 to 290 (DVQDKIYRQA) provides a ligand contact to FAD.

This sequence belongs to the class-II pyridine nucleotide-disulfide oxidoreductase family. In terms of assembly, homodimer. FAD serves as cofactor.

The protein resides in the cytoplasm. It catalyses the reaction [thioredoxin]-dithiol + NADP(+) = [thioredoxin]-disulfide + NADPH + H(+). In Rickettsia typhi (strain ATCC VR-144 / Wilmington), this protein is Thioredoxin reductase (trxB).